We begin with the raw amino-acid sequence, 102 residues long: FMRFamide-like neuropeptides 9 (102 aa).

The signal sequence occupies residues 1–19; the sequence is MNQFYALFLVACIAAMANA. Positions 20–63 are excised as a propeptide; sequence YEEPDLDALAEFCGKESNRKYCDQIAQLATQHAIGINQEQVRME. Residue Phe72 is modified to Phenylalanine amide. Residues 75 to 90 constitute a propeptide that is removed on maturation; it reads RSGYPLVIDDEEMRMD. Position 99 is a phenylalanine amide (Phe99).

This sequence belongs to the FARP (FMRFamide related peptide) family. As to expression, each flp gene is expressed in a distinct set of neurons.

The protein resides in the secreted. Its function is as follows. FMRFamides and FMRFamide-like peptides are neuropeptides. In terms of biological role, KPSFVRF-amide: Has no effect on somatic body wall muscle, inhibits contraction of vaginal vera muscle, and inhibits the activity of the dissected pharyngeal myogenic muscle system. Acts as a ligand for the npr-22 receptor in vitro. The protein is FMRFamide-like neuropeptides 9 of Caenorhabditis elegans.